The primary structure comprises 206 residues: High frequency lysogenization protein HflD homolog (206 aa).

This sequence belongs to the HflD family.

The protein localises to the cytoplasm. The protein resides in the cell inner membrane. This chain is High frequency lysogenization protein HflD homolog, found in Pseudomonas aeruginosa (strain LESB58).